The following is a 283-amino-acid chain: MKQYLDLCQRIIDEGVWIENQRTNKRCLTVINADLVYDVRNNQFPIITTRKSFWKAAIAELLGYIRGYDNAADFRALGTKSWDANANENEAWLKNPARKGLDDMGRVYGVQGRHWKTHDGTELDQLGKIVANLSKGIDDRGEILTFHNPGEFNLGCLRPCMHTHTFSLLGDTLYLTSYQRSCDVPLGLNFNQIQVFTLLALMAQITGNKPGLAYHKIVNAHIYEDQIELMRDVQLKRKPYPSPKLEINPDIKSLKDLETWVTLDDFNVTGYQHHDAIKYPFSV.

Arg-22 lines the dUMP pocket. Cys-160 (nucleophile) is an active-site residue. Residues 180-183 (RSCD), Asn-191, and 221-223 (HIY) each bind dUMP. A (6R)-5,10-methylene-5,6,7,8-tetrahydrofolate-binding site is contributed by Asp-183. Ser-282 lines the (6R)-5,10-methylene-5,6,7,8-tetrahydrofolate pocket.

This sequence belongs to the thymidylate synthase family. Bacterial-type ThyA subfamily. As to quaternary structure, homodimer.

The protein localises to the cytoplasm. The enzyme catalyses dUMP + (6R)-5,10-methylene-5,6,7,8-tetrahydrofolate = 7,8-dihydrofolate + dTMP. It participates in pyrimidine metabolism; dTTP biosynthesis. Catalyzes the reductive methylation of 2'-deoxyuridine-5'-monophosphate (dUMP) to 2'-deoxythymidine-5'-monophosphate (dTMP) while utilizing 5,10-methylenetetrahydrofolate (mTHF) as the methyl donor and reductant in the reaction, yielding dihydrofolate (DHF) as a by-product. This enzymatic reaction provides an intracellular de novo source of dTMP, an essential precursor for DNA biosynthesis. The polypeptide is Thymidylate synthase (Tolumonas auensis (strain DSM 9187 / NBRC 110442 / TA 4)).